A 291-amino-acid polypeptide reads, in one-letter code: Phosphate import ATP-binding protein PstB (291 aa).

The 242-residue stretch at 45 to 286 (YSTQNLDLWY…PADKQTEDYI (242 aa)) folds into the ABC transporter domain. 77 to 84 (GPSGCGKS) is a binding site for ATP.

Belongs to the ABC transporter superfamily. Phosphate importer (TC 3.A.1.7) family. In terms of assembly, the complex is composed of two ATP-binding proteins (PstB), two transmembrane proteins (PstC and PstA) and a solute-binding protein (PstS).

The protein resides in the cell membrane. It carries out the reaction phosphate(out) + ATP + H2O = ADP + 2 phosphate(in) + H(+). In terms of biological role, part of the ABC transporter complex PstSACB involved in phosphate import. Responsible for energy coupling to the transport system. This chain is Phosphate import ATP-binding protein PstB, found in Staphylococcus epidermidis (strain ATCC 12228 / FDA PCI 1200).